A 37-amino-acid chain; its full sequence is Cytochrome b6-f complex subunit 5 (37 aa).

The helical transmembrane segment at 5–25 threads the bilayer; the sequence is SLFGIVLGLIPITLAGLFVTA.

The protein belongs to the PetG family. The 4 large subunits of the cytochrome b6-f complex are cytochrome b6, subunit IV (17 kDa polypeptide, PetD), cytochrome f and the Rieske protein, while the 4 small subunits are PetG, PetL, PetM and PetN. The complex functions as a dimer.

It localises to the plastid. Its subcellular location is the chloroplast thylakoid membrane. Functionally, component of the cytochrome b6-f complex, which mediates electron transfer between photosystem II (PSII) and photosystem I (PSI), cyclic electron flow around PSI, and state transitions. PetG is required for either the stability or assembly of the cytochrome b6-f complex. This Arabis hirsuta (Hairy rock-cress) protein is Cytochrome b6-f complex subunit 5.